The primary structure comprises 342 residues: Anthranilate phosphoribosyltransferase (342 aa).

5-phospho-alpha-D-ribose 1-diphosphate-binding positions include Gly-81, 84–85 (GD), Thr-89, 91–94 (NIST), 109–117 (KHGNRALSS), and Thr-121. Gly-81 serves as a coordination point for anthranilate. Ser-93 serves as a coordination point for Mg(2+). Asn-112 lines the anthranilate pocket. Arg-167 lines the anthranilate pocket. Mg(2+) contacts are provided by Asp-225 and Glu-226.

Belongs to the anthranilate phosphoribosyltransferase family. In terms of assembly, homodimer. Requires Mg(2+) as cofactor.

It catalyses the reaction N-(5-phospho-beta-D-ribosyl)anthranilate + diphosphate = 5-phospho-alpha-D-ribose 1-diphosphate + anthranilate. The protein operates within amino-acid biosynthesis; L-tryptophan biosynthesis; L-tryptophan from chorismate: step 2/5. Functionally, catalyzes the transfer of the phosphoribosyl group of 5-phosphorylribose-1-pyrophosphate (PRPP) to anthranilate to yield N-(5'-phosphoribosyl)-anthranilate (PRA). The polypeptide is Anthranilate phosphoribosyltransferase (Agrobacterium fabrum (strain C58 / ATCC 33970) (Agrobacterium tumefaciens (strain C58))).